A 660-amino-acid polypeptide reads, in one-letter code: Bifunctional polymyxin resistance protein ArnA (660 aa).

The interval 1–304 (MKAIVFAYHD…EMGIVTDVRL (304 aa)) is formyltransferase ArnAFT. His-104 (proton donor; for formyltransferase activity) is an active-site residue. (6R)-10-formyltetrahydrofolate contacts are provided by residues Arg-114 and 136 to 140 (VKRPD). The interval 314-660 (RRTRVLILGV…RTTVQEGDGA (347 aa)) is dehydrogenase ArnADH. NAD(+)-binding positions include Asp-347 and 368 to 369 (DI). Residues Ala-393, Tyr-398, and 432–433 (TS) contribute to the UDP-alpha-D-glucuronate site. Catalysis depends on Glu-434, which acts as the Proton acceptor; for decarboxylase activity. UDP-alpha-D-glucuronate-binding positions include Arg-460, Asn-492, 526–535 (KLMDGGAQKR), and Tyr-613. Catalysis depends on Arg-619, which acts as the Proton donor; for decarboxylase activity.

The protein in the N-terminal section; belongs to the Fmt family. UDP-L-Ara4N formyltransferase subfamily. It in the C-terminal section; belongs to the NAD(P)-dependent epimerase/dehydratase family. UDP-glucuronic acid decarboxylase subfamily. Homohexamer, formed by a dimer of trimers.

It catalyses the reaction UDP-alpha-D-glucuronate + NAD(+) = UDP-beta-L-threo-pentopyranos-4-ulose + CO2 + NADH. It carries out the reaction UDP-4-amino-4-deoxy-beta-L-arabinose + (6R)-10-formyltetrahydrofolate = UDP-4-deoxy-4-formamido-beta-L-arabinose + (6S)-5,6,7,8-tetrahydrofolate + H(+). It participates in nucleotide-sugar biosynthesis; UDP-4-deoxy-4-formamido-beta-L-arabinose biosynthesis; UDP-4-deoxy-4-formamido-beta-L-arabinose from UDP-alpha-D-glucuronate: step 1/3. The protein operates within nucleotide-sugar biosynthesis; UDP-4-deoxy-4-formamido-beta-L-arabinose biosynthesis; UDP-4-deoxy-4-formamido-beta-L-arabinose from UDP-alpha-D-glucuronate: step 3/3. It functions in the pathway bacterial outer membrane biogenesis; lipopolysaccharide biosynthesis. Its function is as follows. Bifunctional enzyme that catalyzes the oxidative decarboxylation of UDP-glucuronic acid (UDP-GlcUA) to UDP-4-keto-arabinose (UDP-Ara4O) and the addition of a formyl group to UDP-4-amino-4-deoxy-L-arabinose (UDP-L-Ara4N) to form UDP-L-4-formamido-arabinose (UDP-L-Ara4FN). The modified arabinose is attached to lipid A and is required for resistance to polymyxin and cationic antimicrobial peptides. This chain is Bifunctional polymyxin resistance protein ArnA, found in Serratia proteamaculans (strain 568).